The primary structure comprises 95 residues: MPKLAVVLLVLLILPLSYFDAAGGQAAEGDRRGNGLARYLQRGGRDNEAECQINTPGSSWGKCCLTRMCGPMCCARSGCTCVYHWRRGHGCSCPG.

Positions 1 to 24 (MPKLAVVLLVLLILPLSYFDAAGG) are cleaved as a signal peptide. The propeptide occupies 25–45 (QAAEGDRRGNGLARYLQRGGR). E50 is modified (4-carboxyglutamate). A 4-hydroxyproline modification is found at P56. Disulfide bonds link C64–C73, C69–C81, C74–C91, and C79–C93.

It belongs to the conotoxin D superfamily. As to quaternary structure, hetero-, homo- or pseudo-homodimer (identical sequence, different post-translational modifications). Heterodimer of [carboxy'Glu-49', hydroxy'Pro-55']Ms20.3 and [carboxyGlu-50, hydroxyPro-56]Ms20.5 may exist. In terms of tissue distribution, expressed by the venom duct.

The protein localises to the secreted. Functionally, alpha-conotoxins act on postsynaptic membranes, they bind to the nicotinic acetylcholine receptors (nAChR) and thus inhibit them. Through its two C-terminal domains, this homodimeric protein would bind to two nAChR allosteric sites, located outside the nAChR C-loop of the principal binding face and at the adjacent binding interface in a clockwise direction. This toxin specifically blocks mammalian neuronal nAChR of the alpha-7/CHRNA7, alpha-3-beta-2/CHRNA3-CHRNB2 and alpha-4-beta-2/CHRNA4-CHRNB2 subtypes. The chain is Alpha-conotoxin-like Ms20.5 from Conus mustelinus (Weasel cone).